Here is a 61-residue protein sequence, read N- to C-terminus: Short neurotoxin 1 (61 aa).

Disulfide bonds link cysteine 3–cysteine 23, cysteine 17–cysteine 40, cysteine 42–cysteine 53, and cysteine 54–cysteine 59.

Belongs to the three-finger toxin family. Short-chain subfamily. Type I alpha-neurotoxin sub-subfamily. In terms of tissue distribution, expressed by the venom gland.

The protein resides in the secreted. Its function is as follows. Binds with high affinity to muscular nicotinic acetylcholine receptors (nAChRs) (tested on Torpedo marmorata AChR, Kd=0.07 nM) and with low affinity to neuronal alpha-7/CHRNA7 nAChRs (tested on chimeric receptor, Kd=3 uM) and inhibit acetylcholine from binding to the receptor, thereby impairing neuromuscular transmission. Produces peripheral paralysis by blocking neuromuscular transmission at the postsynaptic site. This is Short neurotoxin 1 from Naja pallida (Red spitting cobra).